Consider the following 373-residue polypeptide: Alanine racemase (373 aa).

The active-site Proton acceptor; specific for D-alanine is Lys40. Residue Lys40 is modified to N6-(pyridoxal phosphate)lysine. Arg140 contacts substrate. Catalysis depends on Tyr268, which acts as the Proton acceptor; specific for L-alanine. Met315 is a substrate binding site.

The protein belongs to the alanine racemase family. It depends on pyridoxal 5'-phosphate as a cofactor.

It catalyses the reaction L-alanine = D-alanine. It participates in amino-acid biosynthesis; D-alanine biosynthesis; D-alanine from L-alanine: step 1/1. Functionally, catalyzes the interconversion of L-alanine and D-alanine. May also act on other amino acids. The sequence is that of Alanine racemase (alr) from Levilactobacillus brevis (strain ATCC 367 / BCRC 12310 / CIP 105137 / JCM 1170 / LMG 11437 / NCIMB 947 / NCTC 947) (Lactobacillus brevis).